Here is a 75-residue protein sequence, read N- to C-terminus: DNA-directed RNA polymerase subunit omega (75 aa).

The protein belongs to the RNA polymerase subunit omega family. In terms of assembly, in cyanobacteria the RNAP catalytic core is composed of 2 alpha, 1 beta, 1 beta', 1 gamma and 1 omega subunit. When a sigma factor is associated with the core the holoenzyme is formed, which can initiate transcription.

The enzyme catalyses RNA(n) + a ribonucleoside 5'-triphosphate = RNA(n+1) + diphosphate. Promotes RNA polymerase assembly. Latches the N- and C-terminal regions of the beta' subunit thereby facilitating its interaction with the beta and alpha subunits. In Prochlorococcus marinus (strain MIT 9211), this protein is DNA-directed RNA polymerase subunit omega.